Reading from the N-terminus, the 330-residue chain is Ketol-acid reductoisomerase (NADP(+)) (330 aa).

Positions 2-182 (ARLYYDTDAN…GGTRAGILET (181 aa)) constitute a KARI N-terminal Rossmann domain. Residues 25–28 (YGSQ), S51, S53, and 83–86 (DEVQ) contribute to the NADP(+) site. H108 is an active-site residue. G134 serves as a coordination point for NADP(+). Residues 183 to 328 (TFREETETDL…RELRAMFSWL (146 aa)) form the KARI C-terminal knotted domain. Residues D191, E195, E227, and E231 each coordinate Mg(2+). S252 contributes to the substrate binding site.

The protein belongs to the ketol-acid reductoisomerase family. Mg(2+) is required as a cofactor.

It carries out the reaction (2R)-2,3-dihydroxy-3-methylbutanoate + NADP(+) = (2S)-2-acetolactate + NADPH + H(+). The catalysed reaction is (2R,3R)-2,3-dihydroxy-3-methylpentanoate + NADP(+) = (S)-2-ethyl-2-hydroxy-3-oxobutanoate + NADPH + H(+). Its pathway is amino-acid biosynthesis; L-isoleucine biosynthesis; L-isoleucine from 2-oxobutanoate: step 2/4. It participates in amino-acid biosynthesis; L-valine biosynthesis; L-valine from pyruvate: step 2/4. Its function is as follows. Involved in the biosynthesis of branched-chain amino acids (BCAA). Catalyzes an alkyl-migration followed by a ketol-acid reduction of (S)-2-acetolactate (S2AL) to yield (R)-2,3-dihydroxy-isovalerate. In the isomerase reaction, S2AL is rearranged via a Mg-dependent methyl migration to produce 3-hydroxy-3-methyl-2-ketobutyrate (HMKB). In the reductase reaction, this 2-ketoacid undergoes a metal-dependent reduction by NADPH to yield (R)-2,3-dihydroxy-isovalerate. This chain is Ketol-acid reductoisomerase (NADP(+)), found in Synechococcus sp. (strain JA-2-3B'a(2-13)) (Cyanobacteria bacterium Yellowstone B-Prime).